The primary structure comprises 222 residues: Phosphoribosylformylglycinamidine synthase subunit PurQ (222 aa).

The Glutamine amidotransferase type-1 domain occupies A3–A222. The active-site Nucleophile is the C86. Catalysis depends on residues H194 and E196.

In terms of assembly, part of the FGAM synthase complex composed of 1 PurL, 1 PurQ and 2 PurS subunits.

The protein localises to the cytoplasm. It catalyses the reaction N(2)-formyl-N(1)-(5-phospho-beta-D-ribosyl)glycinamide + L-glutamine + ATP + H2O = 2-formamido-N(1)-(5-O-phospho-beta-D-ribosyl)acetamidine + L-glutamate + ADP + phosphate + H(+). It carries out the reaction L-glutamine + H2O = L-glutamate + NH4(+). The protein operates within purine metabolism; IMP biosynthesis via de novo pathway; 5-amino-1-(5-phospho-D-ribosyl)imidazole from N(2)-formyl-N(1)-(5-phospho-D-ribosyl)glycinamide: step 1/2. Its function is as follows. Part of the phosphoribosylformylglycinamidine synthase complex involved in the purines biosynthetic pathway. Catalyzes the ATP-dependent conversion of formylglycinamide ribonucleotide (FGAR) and glutamine to yield formylglycinamidine ribonucleotide (FGAM) and glutamate. The FGAM synthase complex is composed of three subunits. PurQ produces an ammonia molecule by converting glutamine to glutamate. PurL transfers the ammonia molecule to FGAR to form FGAM in an ATP-dependent manner. PurS interacts with PurQ and PurL and is thought to assist in the transfer of the ammonia molecule from PurQ to PurL. The polypeptide is Phosphoribosylformylglycinamidine synthase subunit PurQ (Ruegeria sp. (strain TM1040) (Silicibacter sp.)).